The chain runs to 388 residues: Succinate--CoA ligase [ADP-forming] subunit beta (388 aa).

The ATP-grasp domain occupies 9–244; that stretch reads KEIFRSMGVA…LEEEDPKEIE (236 aa). ATP is bound by residues Lys46, 53 to 55, Glu99, Cys102, and Glu107; that span reads GRG. Mg(2+)-binding residues include Asn199 and Asp213. Substrate-binding positions include Asn264 and 321 to 323; that span reads GIM.

The protein belongs to the succinate/malate CoA ligase beta subunit family. In terms of assembly, heterotetramer of two alpha and two beta subunits. Requires Mg(2+) as cofactor.

The enzyme catalyses succinate + ATP + CoA = succinyl-CoA + ADP + phosphate. The catalysed reaction is GTP + succinate + CoA = succinyl-CoA + GDP + phosphate. Its pathway is carbohydrate metabolism; tricarboxylic acid cycle; succinate from succinyl-CoA (ligase route): step 1/1. Succinyl-CoA synthetase functions in the citric acid cycle (TCA), coupling the hydrolysis of succinyl-CoA to the synthesis of either ATP or GTP and thus represents the only step of substrate-level phosphorylation in the TCA. The beta subunit provides nucleotide specificity of the enzyme and binds the substrate succinate, while the binding sites for coenzyme A and phosphate are found in the alpha subunit. This Staphylococcus aureus (strain Mu3 / ATCC 700698) protein is Succinate--CoA ligase [ADP-forming] subunit beta.